The sequence spans 749 residues: Homeobox-leucine zipper protein ROC7 (749 aa).

The tract at residues 26 to 98 (LDQHQQHQHQ…KKRYHRHTQH (73 aa)) is disordered. The segment covering 46 to 57 (SDGRAPRDELEM) has biased composition (basic and acidic residues). The segment covering 68 to 79 (SGGGGGGGGSGG) has biased composition (gly residues). Basic residues predominate over residues 86–97 (RPRKKRYHRHTQ). Residues 88 to 147 (RKKRYHRHTQHQIQELEAFFKECPHPDDKQRKELSRELGLEPLQVKFWFQNKRTQMKTQH) constitute a DNA-binding region (homeobox). Residues 137–218 (QNKRTQMKTQ…DRISAIAAKY (82 aa)) adopt a coiled-coil conformation. Positions 256 to 494 (ADFDKPLVIE…LERQCERLAS (239 aa)) constitute an START domain.

The protein belongs to the HD-ZIP homeobox family. Class IV subfamily.

It is found in the nucleus. Its function is as follows. Probable transcription factor. The chain is Homeobox-leucine zipper protein ROC7 (ROC7) from Oryza sativa subsp. japonica (Rice).